The primary structure comprises 144 residues: Peptide methionine sulfoxide reductase B7 (144 aa).

One can recognise a MsrB domain in the interval 19–140 (DEEWRAVLSP…NSVSLKFSSA (122 aa)). Positions 58, 61, 104, and 107 each coordinate Zn(2+). Cysteines 76 and 129 form a disulfide. The active-site Nucleophile is the cysteine 129.

The protein belongs to the MsrB Met sulfoxide reductase family. Requires Zn(2+) as cofactor.

The protein resides in the cytoplasm. Its subcellular location is the cytosol. It catalyses the reaction L-methionyl-[protein] + [thioredoxin]-disulfide + H2O = L-methionyl-(R)-S-oxide-[protein] + [thioredoxin]-dithiol. Functionally, catalyzes the reduction of methionine sulfoxide (MetSO) to methionine in proteins. Plays a protective role against oxidative stress by restoring activity to proteins that have been inactivated by methionine oxidation. MSRB family specifically reduces the MetSO R-enantiomer. The polypeptide is Peptide methionine sulfoxide reductase B7 (MSRB7) (Arabidopsis thaliana (Mouse-ear cress)).